The chain runs to 626 residues: Biosynthetic arginine decarboxylase (626 aa).

K99 is modified (N6-(pyridoxal phosphate)lysine). 279 to 289 lines the substrate pocket; that stretch reads VDVGGGLGVDY.

The protein belongs to the Orn/Lys/Arg decarboxylase class-II family. SpeA subfamily. The cofactor is Mg(2+). Pyridoxal 5'-phosphate is required as a cofactor.

It carries out the reaction L-arginine + H(+) = agmatine + CO2. Its pathway is amine and polyamine biosynthesis; agmatine biosynthesis; agmatine from L-arginine: step 1/1. In terms of biological role, catalyzes the biosynthesis of agmatine from arginine. This is Biosynthetic arginine decarboxylase from Chromobacterium violaceum (strain ATCC 12472 / DSM 30191 / JCM 1249 / CCUG 213 / NBRC 12614 / NCIMB 9131 / NCTC 9757 / MK).